A 420-amino-acid polypeptide reads, in one-letter code: D-tagatose-1,6-bisphosphate aldolase subunit GatZ (420 aa).

Belongs to the GatZ/KbaZ family. GatZ subfamily. As to quaternary structure, forms a complex with GatY.

Its pathway is carbohydrate metabolism; D-tagatose 6-phosphate degradation; D-glyceraldehyde 3-phosphate and glycerone phosphate from D-tagatose 6-phosphate: step 2/2. Functionally, component of the tagatose-1,6-bisphosphate aldolase GatYZ that is required for full activity and stability of the Y subunit. Could have a chaperone-like function for the proper and stable folding of GatY. When expressed alone, GatZ does not show any aldolase activity. Is involved in the catabolism of galactitol. The sequence is that of D-tagatose-1,6-bisphosphate aldolase subunit GatZ from Escherichia coli O9:H4 (strain HS).